The sequence spans 301 residues: UBX domain-containing protein 2 (301 aa).

The segment at 1-61 is disordered; it reads MSRNIRTFRD…AARGPDSEAH (61 aa). Residues 89-153 enclose the SEP domain; that stretch reads TISLTLHLWS…KVNRHHEEYV (65 aa). The tract at residues 176-200 is disordered; the sequence is GQSSSSATTAGTSSATTDHNPDHTA. Low complexity predominate over residues 178-192; the sequence is SSSSATTAGTSSATT. The 78-residue stretch at 218-295 folds into the UBX domain; it reads MNEPTTNIQI…NVLNSVVAVK (78 aa).

The protein belongs to the NSFL1C family. Interacts with cdc-48.1 (via N-terminus) and cdc-48.2 (via N-terminus). Interacts with kinase air-1. In terms of tissue distribution, expressed in the germline (at protein level). Expressed in spermatocytes but not in mature sperm (at protein level). Ubiquitously expressed. Predominantly expressed in the spermatheca.

It localises to the cytoplasm. The protein resides in the perinuclear region. The protein localises to the nucleus. Its subcellular location is the cytoskeleton. It is found in the microtubule organizing center. It localises to the centrosome. Functionally, ubiquitin-binding protein which acts as an adapter for ATPase cdc-48.1 and/or cdc-48.2, conferring substrate specificity. Together with ubxn-2 and ubxn-3, plays a role in hermaphrodite spermatogenesis probably by promoting the degradation of sex determination terminal factor tra-1. Probably in association with ATPase cdc-48.1 or/and cdc-48.2, regulates the centrosomal levels of kinase air-1 levels during mitotic progression by promoting air-1 removal from centrosomes in prophase. Also, regulates spindle orientation in the one-cell embryo by controlling centration and rotation of the pronuclei-centrosome complex in prophase. This chain is UBX domain-containing protein 2, found in Caenorhabditis elegans.